A 455-amino-acid polypeptide reads, in one-letter code: P2X purinoceptor 5 (455 aa).

Over 1–34 (MGQAAWKGFVLSLFDYKTAKFVVAKSKKVGLLYR) the chain is Cytoplasmic. A helical membrane pass occupies residues 35-55 (VLQLIILLYLLIWVFLIKKSY). Residues 56-341 (QDIDTSLQSA…SIIPTVINIG (286 aa)) lie on the Extracellular side of the membrane. ATP-binding residues include Lys69 and Lys71. Residue Asn77 is glycosylated (N-linked (GlcNAc...) asparagine). 3 cysteine pairs are disulfide-bonded: Cys118-Cys169, Cys129-Cys152, and Cys135-Cys163. Asn157 is a glycosylation site (N-linked (GlcNAc...) asparagine). Position 189 (Thr189) interacts with ATP. Residue Asn202 is glycosylated (N-linked (GlcNAc...) asparagine). Disulfide bonds link Cys220–Cys229 and Cys263–Cys272. Residues Asn294, Arg296, and Lys314 each coordinate ATP. The helical transmembrane segment at 342–362 (SGLALMGAGAFFCDLVLIYLI) threads the bilayer. At 363-455 (RKSEFYRDKK…QSQILHPVKT (93 aa)) the chain is on the cytoplasmic side. Residues 384–401 (NVEVEANEMEQERPEDEP) show a composition bias toward acidic residues. A disordered region spans residues 384–422 (NVEVEANEMEQERPEDEPLERVRQDEQSQELAQSGRKQN). A compositionally biased stretch (polar residues) spans 412–422 (QELAQSGRKQN).

Belongs to the P2X receptor family. Functional P2XRs are organized as homomeric and heteromeric trimers. Homotrimer. Forms heterotrimer with P2RX1. Predominantly expressed in heart but are also present in brain, spinal cord and adrenal gland.

It localises to the cell membrane. It catalyses the reaction Na(+)(in) = Na(+)(out). It carries out the reaction Ca(2+)(in) = Ca(2+)(out). The enzyme catalyses chloride(in) = chloride(out). With respect to regulation, activated by ATP. Slowly desensitizing. Not activated by ATP agonist alpha/beta-methylene-ATP. Highly sensitive to the antagonists suramin and PPADS. In terms of biological role, ATP-gated nonselective transmembrane cation channel. Permeable to potassium, sodium and calcium. Unlike other P2RX receptors, the P2X5 receptor is also permeable to chloride. Acts as an important regulator of inflammatory-related bone loss and osteoclast multinucleation. The chain is P2X purinoceptor 5 (P2rx5) from Rattus norvegicus (Rat).